We begin with the raw amino-acid sequence, 416 residues long: Glutamyl-tRNA reductase (416 aa).

Substrate-binding positions include 50–53, Ser109, 114–116, and Gln120; these read TCNR and EPQ. Residue Cys51 is the Nucleophile of the active site. 189–194 is an NADP(+) binding site; that stretch reads GAGEMI.

Belongs to the glutamyl-tRNA reductase family. As to quaternary structure, homodimer.

The enzyme catalyses (S)-4-amino-5-oxopentanoate + tRNA(Glu) + NADP(+) = L-glutamyl-tRNA(Glu) + NADPH + H(+). The protein operates within porphyrin-containing compound metabolism; protoporphyrin-IX biosynthesis; 5-aminolevulinate from L-glutamyl-tRNA(Glu): step 1/2. In terms of biological role, catalyzes the NADPH-dependent reduction of glutamyl-tRNA(Glu) to glutamate 1-semialdehyde (GSA). In Ruthia magnifica subsp. Calyptogena magnifica, this protein is Glutamyl-tRNA reductase.